A 517-amino-acid polypeptide reads, in one-letter code: Splicing factor cactin (517 aa).

A compositionally biased stretch (basic and acidic residues) spans 1-14; that stretch reads MAFRDSTRDFNRSR. Residues 1–59 form a disordered region; that stretch reads MAFRDSTRDFNRSRPEKRHASRSSSPRSFRPSNQNARANYNLPRVRDAMKEEERSRETK. The segment covering 22-32 has biased composition (low complexity); the sequence is RSSSPRSFRPS. Positions 44-59 are enriched in basic and acidic residues; that stretch reads RVRDAMKEEERSRETK.

This sequence belongs to the CACTIN family. As to quaternary structure, interacts with sde2. Interacts with cdc5.

Its function is as follows. Plays a role in pre-mRNA splicing by facilitating excision of introns featuring long spacing between the branchpoint and 3'-splice site (ss). Recruited to the spliceosome by sde2, which may enable folding of the RNA between the BP and 3'-ss to guide the splice site towards the spliceosome's catalytic center. Assists the splicing of several components involved in chromatin organization. The protein is Splicing factor cactin of Schizosaccharomyces pombe (strain 972 / ATCC 24843) (Fission yeast).